Here is a 270-residue protein sequence, read N- to C-terminus: Probable septum site-determining protein MinC (270 aa).

Residues 105 to 129 (DRRAPSSKAADEAPVQQAEPAAPAA) form a disordered region. The span at 116 to 129 (EAPVQQAEPAAPAA) shows a compositional bias: low complexity.

Belongs to the MinC family. In terms of assembly, interacts with MinD and FtsZ.

Functionally, cell division inhibitor that blocks the formation of polar Z ring septums. Rapidly oscillates between the poles of the cell to destabilize FtsZ filaments that have formed before they mature into polar Z rings. Prevents FtsZ polymerization. This chain is Probable septum site-determining protein MinC, found in Burkholderia mallei (strain NCTC 10247).